Here is a 349-residue protein sequence, read N- to C-terminus: Aspartate carbamoyltransferase catalytic subunit (349 aa).

Residues arginine 59 and threonine 60 each coordinate carbamoyl phosphate. Lysine 87 provides a ligand contact to L-aspartate. Residues arginine 109, histidine 142, and glutamine 145 each coordinate carbamoyl phosphate. Residues arginine 182 and arginine 253 each contribute to the L-aspartate site. Carbamoyl phosphate contacts are provided by glycine 294 and proline 295.

Belongs to the aspartate/ornithine carbamoyltransferase superfamily. ATCase family. Heterododecamer (2C3:3R2) of six catalytic PyrB chains organized as two trimers (C3), and six regulatory PyrI chains organized as three dimers (R2).

It catalyses the reaction carbamoyl phosphate + L-aspartate = N-carbamoyl-L-aspartate + phosphate + H(+). It functions in the pathway pyrimidine metabolism; UMP biosynthesis via de novo pathway; (S)-dihydroorotate from bicarbonate: step 2/3. Catalyzes the condensation of carbamoyl phosphate and aspartate to form carbamoyl aspartate and inorganic phosphate, the committed step in the de novo pyrimidine nucleotide biosynthesis pathway. The sequence is that of Aspartate carbamoyltransferase catalytic subunit from Synechococcus sp. (strain CC9902).